The primary structure comprises 367 residues: Aminomethyltransferase (367 aa).

It belongs to the GcvT family. In terms of assembly, the glycine cleavage system is composed of four proteins: P, T, L and H.

The enzyme catalyses N(6)-[(R)-S(8)-aminomethyldihydrolipoyl]-L-lysyl-[protein] + (6S)-5,6,7,8-tetrahydrofolate = N(6)-[(R)-dihydrolipoyl]-L-lysyl-[protein] + (6R)-5,10-methylene-5,6,7,8-tetrahydrofolate + NH4(+). In terms of biological role, the glycine cleavage system catalyzes the degradation of glycine. The chain is Aminomethyltransferase from Mycobacterium leprae (strain Br4923).